The sequence spans 258 residues: Immediate-early protein IE-0 (258 aa).

An RING-type zinc finger spans residues 191-237; that stretch reads CNICEDSSAEEQFLKPNVCCGYRVCNACYAKLWEFCTGAYPVCPICK.

The protein is Immediate-early protein IE-0 (IE-0) of Lymantria dispar multicapsid nuclear polyhedrosis virus (LdMNPV).